The chain runs to 466 residues: Soluble pyridine nucleotide transhydrogenase (466 aa).

36–45 (ERYQNVGGGC) provides a ligand contact to FAD.

Belongs to the class-I pyridine nucleotide-disulfide oxidoreductase family. The cofactor is FAD.

It is found in the cytoplasm. The enzyme catalyses NAD(+) + NADPH = NADH + NADP(+). Its function is as follows. Conversion of NADPH, generated by peripheral catabolic pathways, to NADH, which can enter the respiratory chain for energy generation. The protein is Soluble pyridine nucleotide transhydrogenase of Escherichia coli O9:H4 (strain HS).